The following is a 493-amino-acid chain: Probable vesicular acetylcholine transporter-B (493 aa).

At 1–39 (MQSTGAPGLAQSAVLQLSAMGERSRELGGALREPERKRR) the chain is on the cytoplasmic side. The helical transmembrane segment at 40–60 (LLLVVVCVALLLDNMLYMVIV) threads the bilayer. The Lumenal, vesicle segment spans residues 61–86 (PIIPDYLADLRGERGNSSADLDIQIG). An N-linked (GlcNAc...) asparagine glycan is attached at asparagine 76. A helical membrane pass occupies residues 87-107 (VLFASKALLQLLVNPLSGTFI). Residues 108–113 (DRVGYD) are Cytoplasmic-facing. Residues 114 to 134 (LPLLIGLLVMFLSTCIFAFAE) traverse the membrane as a helical segment. The Lumenal, vesicle segment spans residues 135–143 (NYGTLFAAR). Residues 144-164 (SLQGLGSAFADTSGIAMIADK) traverse the membrane as a helical segment. Residues 165–174 (FTEEAERSRA) lie on the Cytoplasmic side of the membrane. A helical transmembrane segment spans residues 175 to 195 (LGIALAFISFGSLVAPPFGGI). The Lumenal, vesicle segment spans residues 196-203 (LYEFAGKR). A helical membrane pass occupies residues 204–224 (VPFIVLACVCLADGVLLLTVV). Over 225-247 (KPFSDRTRENMPVGTPIHRLMVD) the chain is Cytoplasmic. The chain crosses the membrane as a helical span at residues 248–268 (PYIAVVAGALTVCNIPLAFLE). The Lumenal, vesicle segment spans residues 269-284 (PTIANWMESTMDASKW). A helical transmembrane segment spans residues 285 to 305 (QMGLVWLPAFLPHVLGVYITV). Topologically, residues 306–315 (RLAARYPERQ) are cytoplasmic. Residues 316–336 (WFYGALGMVIIGASSCTVPAC) form a helical membrane-spanning segment. The Lumenal, vesicle segment spans residues 337 to 347 (KTFGELVFPLC). A helical transmembrane segment spans residues 348–368 (GICFGIALVDTALLPTLAFLV). The Cytoplasmic segment spans residues 369 to 378 (DVRHVSVYGS). Residues 379–399 (VYAIADISYSVAYAMGPVVAG) traverse the membrane as a helical segment. The Lumenal, vesicle portion of the chain corresponds to 400–406 (QIVHNLG). A helical membrane pass occupies residues 407-427 (FVQLNLGMGLVNVLYAPALLL). The Cytoplasmic segment spans residues 428-493 (LRPVCQIKPS…EEEESGPESA (66 aa)). The tract at residues 467–493 (GLSAGAGTEHGLRGRSEEEEESGPESA) is disordered. Residues 483–493 (EEEEESGPESA) show a composition bias toward acidic residues.

Belongs to the major facilitator superfamily. Vesicular transporter family.

Its subcellular location is the membrane. Functionally, involved in acetylcholine transport into synaptic vesicles. The protein is Probable vesicular acetylcholine transporter-B (slc18a3b) of Danio rerio (Zebrafish).